A 134-amino-acid chain; its full sequence is ATP synthase epsilon chain (134 aa).

Positions 100–134 are disordered; it reads NQKLQNENLSEEEKEHYEKQRSRSQALLNLASAKV. The segment covering 110–120 has biased composition (basic and acidic residues); the sequence is EEEKEHYEKQR.

The protein belongs to the ATPase epsilon chain family. F-type ATPases have 2 components, CF(1) - the catalytic core - and CF(0) - the membrane proton channel. CF(1) has five subunits: alpha(3), beta(3), gamma(1), delta(1), epsilon(1). CF(0) has three main subunits: a, b and c.

Its subcellular location is the cell inner membrane. Its function is as follows. Produces ATP from ADP in the presence of a proton gradient across the membrane. The protein is ATP synthase epsilon chain of Sulfurihydrogenibium sp. (strain YO3AOP1).